The chain runs to 519 residues: Lysine 5,6-aminomutase alpha subunit (519 aa).

Aspartate 57 to valine 59 is a binding site for adenosylcob(III)alamin. Pyridoxal 5'-phosphate-binding positions include arginine 187–serine 192, serine 241, tyrosine 266, arginine 271, and asparagine 302.

The protein belongs to the KamD family. As to quaternary structure, heterotetramer of 2 alpha and 2 beta subunits. The cofactor is adenosylcob(III)alamin. Requires pyridoxal 5'-phosphate as cofactor.

The enzyme catalyses (3S)-3,6-diaminohexanoate = (3S,5S)-3,5-diaminohexanoate. It carries out the reaction D-lysine = (2R,5S)-2,5-diaminohexanoate. It functions in the pathway amino-acid metabolism; lysine degradation. With respect to regulation, rapidly inactivated in the presence of D-lysine and to a lesser extent in the absence of adenosylcobalamin (Adocbl). Activity is stable in the presence of Adocbl when D-lysine is absent. Adocbl imparts thermal stability at 37 degrees Celsius. In terms of biological role, catalyzes the migration of the L-beta-lysine and D-lysine epsilon amino group to the delta carbon to produce 3,5-diaminohexanoate and 2,5-diaminohexanoate, respectively. This chain is Lysine 5,6-aminomutase alpha subunit (kamD), found in Acetoanaerobium sticklandii (strain ATCC 12662 / DSM 519 / JCM 1433 / CCUG 9281 / NCIMB 10654 / HF) (Clostridium sticklandii).